The sequence spans 113 residues: U11-theraphotoxin-Hhn1f (113 aa).

The first 21 residues, 1-21, serve as a signal peptide directing secretion; sequence MNTVRVTFLLVFVLAVSLGQA. Positions 22 to 74 are excised as a propeptide; it reads DKDENRMEMQEKTEQGKSYLDFAENLLLQKLEELEAKLLEEDSEESRNSRQKR. Residues 61 to 83 form a disordered region; it reads EEDSEESRNSRQKRCIGEGVPCD. 3 disulfide bridges follow: Cys75/Cys90, Cys82/Cys95, and Cys89/Cys110.

Belongs to the neurotoxin 14 (magi-1) family. 01 (HNTX-16) subfamily. In terms of tissue distribution, expressed by the venom gland.

It localises to the secreted. Its function is as follows. Probable ion channel inhibitor. This Cyriopagopus hainanus (Chinese bird spider) protein is U11-theraphotoxin-Hhn1f.